Reading from the N-terminus, the 168-residue chain is UPF0304 protein MJECS11 (168 aa).

This sequence belongs to the UPF0304 family.

The polypeptide is UPF0304 protein MJECS11 (Methanocaldococcus jannaschii (strain ATCC 43067 / DSM 2661 / JAL-1 / JCM 10045 / NBRC 100440) (Methanococcus jannaschii)).